Consider the following 313-residue polypeptide: Ribosomal RNA small subunit methyltransferase H (313 aa).

S-adenosyl-L-methionine-binding positions include 36–38 (GGH), D56, F80, D102, and Q109.

The protein belongs to the methyltransferase superfamily. RsmH family.

It localises to the cytoplasm. The catalysed reaction is cytidine(1402) in 16S rRNA + S-adenosyl-L-methionine = N(4)-methylcytidine(1402) in 16S rRNA + S-adenosyl-L-homocysteine + H(+). Functionally, specifically methylates the N4 position of cytidine in position 1402 (C1402) of 16S rRNA. This Actinobacillus pleuropneumoniae serotype 3 (strain JL03) protein is Ribosomal RNA small subunit methyltransferase H.